A 345-amino-acid polypeptide reads, in one-letter code: AP2-like ethylene-responsive transcription factor At1g16060 (345 aa).

Positions 15-62 are disordered; it reads TRQSKKTSVENETGDDQSATSVVLKAKRKRRSQPRDAPPQRSSVHRGV. 2 DNA-binding regions (AP2/ERF) span residues 58 to 124 and 160 to 218; these read VHRG…LNFP and KYRG…TNFD. Residues 243–302 form a disordered region; sequence HSDLSPFIKPNHESDLSQSQSSSEDNDDRKTKLLKSSPLVAEEVIGPSTPPEIAPPRRSF.

It belongs to the AP2/ERF transcription factor family. AP2 subfamily.

It is found in the nucleus. Probably acts as a transcriptional activator. Binds to the GCC-box pathogenesis-related promoter element. May be involved in the regulation of gene expression by stress factors and by components of stress signal transduction pathways. This Arabidopsis thaliana (Mouse-ear cress) protein is AP2-like ethylene-responsive transcription factor At1g16060.